Reading from the N-terminus, the 342-residue chain is Holliday junction branch migration complex subunit RuvB (342 aa).

Residues 1–185 form a large ATPase domain (RuvB-L) region; sequence MTVKPLRDVT…FPIQERLEYY (185 aa). ATP contacts are provided by residues L24, R25, G66, K69, T70, S71, 132-134, R175, Y185, and R222; that span reads EDY. T70 lines the Mg(2+) pocket. Residues 186 to 256 are small ATPAse domain (RuvB-S); sequence GPAELKEIAV…VVDRTLRRLE (71 aa). The head domain (RuvB-H) stretch occupies residues 259–342; it reads ARGLDAMDRR…RSGGKQGSLV (84 aa). DNA-binding residues include R314 and R319.

It belongs to the RuvB family. As to quaternary structure, homohexamer. Forms an RuvA(8)-RuvB(12)-Holliday junction (HJ) complex. HJ DNA is sandwiched between 2 RuvA tetramers; dsDNA enters through RuvA and exits via RuvB. An RuvB hexamer assembles on each DNA strand where it exits the tetramer. Each RuvB hexamer is contacted by two RuvA subunits (via domain III) on 2 adjacent RuvB subunits; this complex drives branch migration. In the full resolvosome a probable DNA-RuvA(4)-RuvB(12)-RuvC(2) complex forms which resolves the HJ.

The protein resides in the cytoplasm. It catalyses the reaction ATP + H2O = ADP + phosphate + H(+). Functionally, the RuvA-RuvB-RuvC complex processes Holliday junction (HJ) DNA during genetic recombination and DNA repair, while the RuvA-RuvB complex plays an important role in the rescue of blocked DNA replication forks via replication fork reversal (RFR). RuvA specifically binds to HJ cruciform DNA, conferring on it an open structure. The RuvB hexamer acts as an ATP-dependent pump, pulling dsDNA into and through the RuvAB complex. RuvB forms 2 homohexamers on either side of HJ DNA bound by 1 or 2 RuvA tetramers; 4 subunits per hexamer contact DNA at a time. Coordinated motions by a converter formed by DNA-disengaged RuvB subunits stimulates ATP hydrolysis and nucleotide exchange. Immobilization of the converter enables RuvB to convert the ATP-contained energy into a lever motion, pulling 2 nucleotides of DNA out of the RuvA tetramer per ATP hydrolyzed, thus driving DNA branch migration. The RuvB motors rotate together with the DNA substrate, which together with the progressing nucleotide cycle form the mechanistic basis for DNA recombination by continuous HJ branch migration. Branch migration allows RuvC to scan DNA until it finds its consensus sequence, where it cleaves and resolves cruciform DNA. The sequence is that of Holliday junction branch migration complex subunit RuvB from Anaeromyxobacter dehalogenans (strain 2CP-C).